We begin with the raw amino-acid sequence, 305 residues long: RNA-binding protein with serine-rich domain 1 (305 aa).

Positions 1–10 (MDLSGVKKKS) are enriched in basic residues. The interval 1–161 (MDLSGVKKKS…KRRSPSPKPT (161 aa)) is necessary for interaction with SRP54, nuclear localization and exon-skipping. The segment at 1 to 170 (MDLSGVKKKS…TKVHIGRLTR (170 aa)) is disordered. Residues 1 to 220 (MDLSGVKKKS…ENPDEAEKAL (220 aa)) are necessary for interaction with the cleaved p110 isoform of CDC2L1. Residues Lys7 and Lys15 each participate in a glycyl lysine isopeptide (Lys-Gly) (interchain with G-Cter in SUMO2) cross-link. Positions 33–59 (DRSDEKSKDRSKDKGATKESSEKDRGR) are enriched in basic and acidic residues. Ser53 bears the Phosphoserine; by CK2 mark. Over residues 68-126 (ASSGSSSTRSRSSSTSSSGSSTSTGSSSGSSSSSASSRSGSSSTSRSSSSSSSSGSPSP) the composition is skewed to low complexity. Positions 69 to 121 (SSGSSSTRSRSSSTSSSGSSTSTGSSSGSSSSSASSRSGSSSTSRSSSSSSSS) are necessary for interactions with UPF2 and UPF3B and UPF2-dependent NMD. Basic residues-rich tracts occupy residues 127-143 (SRRRHDNRRRSRSKSKP) and 151-167 (RKRRSPSPKPTKVHIGR). Phosphoserine occurs at positions 155 and 157. A necessary for interaction with PNN and exon-skipping region spans residues 156–242 (PSPKPTKVHI…ITATAVLAPW (87 aa)). Residues 159 to 244 (KPTKVHIGRL…ATAVLAPWPR (86 aa)) form an interaction with SAP18 and ACIN1 region. Phosphothreonine is present on Thr161. Residues 161–240 (TKVHIGRLTR…QEITATAVLA (80 aa)) form the RRM domain. Lys218 carries the post-translational modification N6-acetyllysine. The interval 238 to 305 (VLAPWPRPPP…RSRSSSNSSR (68 aa)) is necessary for interaction with TRA2B, nuclear localization and exon-skipping. Residues 240–305 (APWPRPPPRR…RSRSSSNSSR (66 aa)) are disordered. A compositionally biased stretch (pro residues) spans 242-262 (WPRPPPRRFSPPRRMLPPPPM). Basic residues predominate over residues 266–298 (SPPRMRRRSRSPRRRSPVRRRSRSPGRRRHRSR).

The protein belongs to the splicing factor SR family. Found in mRNA splicing-dependent exon junction complexes (EJC). Found in a post-splicing complex with NXF1, RBM8A, UPF1, UPF2, UPF3A, UPF3B and RNPS1. Component of the heterotrimeric ASAP (apoptosis- and splicing-associated protein) and PSAP complexes consisting of RNPS1, SAP18 and either ACIN1 or PNN, respectively; the ASAP and PSAP complexes probably are formed mutually exclusive. Component of the active spliceosome. Associates with polysomes. Interacts with the cleaved p110 isoform of CDC2L1, CSNK2A1, PNN, SART3, SRP54, SRRM1 and TRA2B/SFRS10. Phosphorylated on one or more of the four Ser/Thr residues (Ser-43, Thr-49, Ser-52 or Ser-53). Ser-53 phosphorylation site is important for splicing and translation stimulation activity in vitro. As to expression, ubiquitous.

It localises to the nucleus. Its subcellular location is the nucleus speckle. The protein resides in the cytoplasm. Its function is as follows. Part of pre- and post-splicing multiprotein mRNP complexes. Auxiliary component of the splicing-dependent multiprotein exon junction complex (EJC) deposited at splice junction on mRNAs. The EJC is a dynamic structure consisting of core proteins and several peripheral nuclear and cytoplasmic associated factors that join the complex only transiently either during EJC assembly or during subsequent mRNA metabolism. Component of the ASAP and PSAP complexes which bind RNA in a sequence-independent manner and are proposed to be recruited to the EJC prior to or during the splicing process and to regulate specific excision of introns in specific transcription subsets. The ASAP complex can inhibit RNA processing during in vitro splicing reactions. The ASAP complex promotes apoptosis and is disassembled after induction of apoptosis. Enhances the formation of the ATP-dependent A complex of the spliceosome. Involved in both constitutive splicing and, in association with SRP54 and TRA2B/SFRS10, in distinctive modulation of alternative splicing in a substrate-dependent manner. Involved in the splicing modulation of BCL2L1/Bcl-X (and probably other apoptotic genes); specifically inhibits formation of proapoptotic isoforms such as Bcl-X(S); the activity is different from the established EJC assembly and function. Participates in mRNA 3'-end cleavage. Involved in UPF2-dependent nonsense-mediated decay (NMD) of mRNAs containing premature stop codons. Also mediates increase of mRNA abundance and translational efficiency. Binds spliced mRNA 20-25 nt upstream of exon-exon junctions. This is RNA-binding protein with serine-rich domain 1 (RNPS1) from Homo sapiens (Human).